The primary structure comprises 204 residues: Altered inheritance of mitochondria protein 20 (204 aa).

Residues 6–26 traverse the membrane as a helical segment; the sequence is VAVGTAVGIPIAVGVIIALIF.

It belongs to the SKG1 family.

It is found in the vacuole membrane. In terms of biological role, involved in cell cycle progression and surviving DNA damage. The chain is Altered inheritance of mitochondria protein 20 (AIM20) from Saccharomyces cerevisiae (strain RM11-1a) (Baker's yeast).